Consider the following 519-residue polypeptide: Nitrogen fixation regulatory protein (519 aa).

Residues 23–93 form the PAS 1 domain; the sequence is LPEIFRQTVE…QALWGRLAQK (71 aa). The PAC domain maps to 94–148; sequence KPWSGVLVNRRKDKTLYLAELTVAPVLNEAGETIYYLGMHRDTSELHELEQRVNN. The 67-residue stretch at 151–217 folds into the PAS 2 domain; the sequence is LMIEAVVNAA…FETLENQGSA (67 aa). In terms of domain architecture, Histidine kinase spans 302 to 517; that stretch reads AAIHRLQGPV…RIVVELPFSA (216 aa). His305 carries the phosphohistidine; by autocatalysis modification.

FAD serves as cofactor.

The catalysed reaction is ATP + protein L-histidine = ADP + protein N-phospho-L-histidine.. Required for the inhibition of NifA activity in response to oxygen and low level of fixed nitrogen. This Azotobacter vinelandii protein is Nitrogen fixation regulatory protein (nifL).